A 140-amino-acid chain; its full sequence is uncharacterized protein (140 aa).

The C2H2-type zinc-finger motif lies at 21–42 (CPYCNYTNADVKAIKKHIKSKH).

To M.jannaschii MJECL27.

This is an uncharacterized protein from Methanocaldococcus jannaschii (strain ATCC 43067 / DSM 2661 / JAL-1 / JCM 10045 / NBRC 100440) (Methanococcus jannaschii).